Here is a 458-residue protein sequence, read N- to C-terminus: Probable M18 family aminopeptidase 1 (458 aa).

Zn(2+) contacts are provided by His95, His170, and His434.

It belongs to the peptidase M18 family. It depends on Zn(2+) as a cofactor.

In Borrelia garinii subsp. bavariensis (strain ATCC BAA-2496 / DSM 23469 / PBi) (Borreliella bavariensis), this protein is Probable M18 family aminopeptidase 1.